Consider the following 1007-residue polypeptide: Sal-like protein 2 (1007 aa).

The disordered stretch occupies residues 1-33 (MSRRKQRKPQQLISDCEGPSASENGDASEEDHP). Residues 34–56 (QVCAKCCAQFTDPTEFLAHQNAC) form a C2H2-type 1; atypical zinc finger. Disordered stretches follow at residues 59 to 121 (DPPV…GEES), 137 to 177 (GGGL…SGHL), 220 to 243 (PASP…PLFS), and 286 to 306 (PFSA…SPAL). Residues 70–80 (ENPNNSSASSE) are compositionally biased toward low complexity. Residues 99–108 (PPDSGSSVPT) are compositionally biased toward polar residues. A compositionally biased stretch (pro residues) spans 151 to 171 (PLPPESTPAPPPPPPPPPPPG). Position 243 is a phosphoserine (S243). 2 C2H2-type zinc fingers span residues 373 to 395 (HKCR…LRSH) and 401 to 423 (YKCN…FHRH). Disordered stretches follow at residues 520–540 (KNKA…SGVA) and 610–629 (AASG…ASSG). 3 C2H2-type zinc fingers span residues 631-653 (NQCV…YGQH), 659-681 (FKCK…FVGH), and 691-713 (NSCP…VRMH). A disordered region spans residues 714–886 (LGGQIPNGGT…SALTPEGEAT (173 aa)). Residues 734–744 (ENGSEQSTVSG) show a composition bias toward polar residues. Residues 747–757 (SFPQQQSQQPS) are compositionally biased toward low complexity. Acidic residues predominate over residues 758–782 (PEEELSEEEEEEDEEEEEDVTDEDS). A phosphoserine mark is found at S797, S802, and S806. Residues 803-812 (EEASGAEEEV) are compositionally biased toward acidic residues. The segment covering 862–871 (GKEEGGKPER) has biased composition (basic and acidic residues). K911 is covalently cross-linked (Glycyl lysine isopeptide (Lys-Gly) (interchain with G-Cter in ubiquitin)). C2H2-type zinc fingers lie at residues 911–933 (KACE…QKTH) and 940–963 (FTCV…LLAH).

The protein belongs to the sal C2H2-type zinc-finger protein family. Highest levels in adult brain (in different areas). Lower levels in heart; very low levels in kidney and pancreas. Expressed throughout the retina and lens vesicle as well as the periocular mesenchyme.

It is found in the nucleus. Probable transcription factor that plays a role in eye development before, during, and after optic fissure closure. The chain is Sal-like protein 2 (SALL2) from Homo sapiens (Human).